The chain runs to 282 residues: 2-dehydro-3-deoxyphosphooctonate aldolase (282 aa).

Belongs to the KdsA family.

The protein localises to the cytoplasm. The catalysed reaction is D-arabinose 5-phosphate + phosphoenolpyruvate + H2O = 3-deoxy-alpha-D-manno-2-octulosonate-8-phosphate + phosphate. Its pathway is carbohydrate biosynthesis; 3-deoxy-D-manno-octulosonate biosynthesis; 3-deoxy-D-manno-octulosonate from D-ribulose 5-phosphate: step 2/3. It participates in bacterial outer membrane biogenesis; lipopolysaccharide biosynthesis. This Shewanella halifaxensis (strain HAW-EB4) protein is 2-dehydro-3-deoxyphosphooctonate aldolase.